A 363-amino-acid polypeptide reads, in one-letter code: tRNA dimethylallyltransferase (363 aa).

Positions 1–55 (MLACNDDTSLYLLVKQVTKKEIYSNDLENGNVKRGASMQSLYLIGDPKCCRNNSS) are unknown insert. An ATP-binding site is contributed by 65-72 (GPTASGKS). 67-72 (TASGKS) provides a ligand contact to substrate. 2 interaction with substrate tRNA regions span residues 90-93 (DSMQ) and 214-218 (QRLIR).

It belongs to the IPP transferase family. In terms of assembly, monomer. Requires Mg(2+) as cofactor.

It catalyses the reaction adenosine(37) in tRNA + dimethylallyl diphosphate = N(6)-dimethylallyladenosine(37) in tRNA + diphosphate. Its function is as follows. Catalyzes the transfer of a dimethylallyl group onto the adenine at position 37 in tRNAs that read codons beginning with uridine, leading to the formation of N6-(dimethylallyl)adenosine (i(6)A). This chain is tRNA dimethylallyltransferase, found in Rickettsia conorii (strain ATCC VR-613 / Malish 7).